The chain runs to 463 residues: Formate-nitrite transporter 2 (463 aa).

At 1–100 (MCSIPPLRLL…VKKTQLRIDR (100 aa)) the chain is on the cytoplasmic side. The chain crosses the membrane as a helical span at residues 101–121 (LLLQAFMAGIFVAMAGHCCTV). At 122–142 (LAGSYPTDPGDPLAVAKPTQK) the chain is on the extracellular side. The helical transmembrane segment at 143–163 (FIYGALFPVAFICIILTGAEL) threads the bilayer. The Cytoplasmic segment spans residues 164–189 (FTGNTMTMLICYFQKRVTMLQLGVNW). A helical transmembrane segment spans residues 190–210 (LGSLAGNWLGALFGAYFLSYL). Residues 211-237 (TGALGDEHVRQFLFRTCVNKISYGWGE) are Extracellular-facing. Residues 238–258 (CFLRGVGCNTFVCLAVWAVIA) form a helical membrane-spanning segment. Residues 259–265 (SENVAGK) lie on the Cytoplasmic side of the membrane. Residues 266–286 (VLVMWFPIVAFCVGGYEHIIA) form a helical membrane-spanning segment. Over 287 to 305 (NMYTLQAGLMAGAPVAILD) the chain is Extracellular. The chain crosses the membrane as a helical span at residues 306 to 326 (VIAFNFLPTLLGNIVGGCLLV). At 327–463 (GAVYAYNFYP…QTAESVAQQV (137 aa)) the chain is on the cytoplasmic side. The tract at residues 424–463 (SGNLSTHARLDLPNRPVEPPSDGLEVTPQSQTAESVAQQV) is disordered. Positions 450-463 (TPQSQTAESVAQQV) are enriched in polar residues.

The protein belongs to the FNT transporter (TC 1.A.16) family. In terms of assembly, homopentamer.

The protein localises to the cell membrane. It catalyses the reaction (S)-lactate(in) + H(+)(in) = (S)-lactate(out) + H(+)(out). The enzyme catalyses formate(in) + H(+)(in) = formate(out) + H(+)(out). It carries out the reaction pyruvate(out) + H(+)(out) = pyruvate(in) + H(+)(in). The catalysed reaction is acetate(out) + H(+)(out) = acetate(in) + H(+)(in). With respect to regulation, inhibited by p-chloromercuribenzene sulfonate (pCMBS). Methyl methanethiosulfonate (MMTS) inhibits L-lactate but not formate transport. Inhibited by the Malaria Box compound MMV007839. Inhibited by BH-296, BH-317, BH-326 and BH-388 compounds. Its function is as follows. Monocarboxylate-proton symporter; active in acidic-to-neutral pH range. Transports L-lactate and formate. This Toxoplasma gondii (strain ATCC 50611 / Me49) protein is Formate-nitrite transporter 2.